Consider the following 302-residue polypeptide: MQDRIVRATAANGGIRLVAVLTTESSLEAKKRHDLSYLTTCILGRAFSASLLLASSMKIMHGRVTLRVRSDGPLKGLLVDAGRDGKVRGYVGNPDLELDLVKIDSNKYSFDFTKALGTGYLNVIRDSGIGEPFTSTVELVNGNIAEDLASYLYHSEQTPSAVFIGEKIQNQGIICSGGLLAQVLPKKDTDPLLVSLLEERCKEVNSFSEDLFQSKDNLLSLIKKIFPDIDDESISEKARSQEVSFKCKCSKQRSLNAMNMLDKSELEDILKKDGNAELVCEFCKNKYLINYEEIKLMIENQS.

2 cysteine pairs are disulfide-bonded: Cys-247-Cys-249 and Cys-280-Cys-283.

The protein belongs to the HSP33 family. In terms of processing, under oxidizing conditions two disulfide bonds are formed involving the reactive cysteines. Under reducing conditions zinc is bound to the reactive cysteines and the protein is inactive.

The protein localises to the cytoplasm. Its function is as follows. Redox regulated molecular chaperone. Protects both thermally unfolding and oxidatively damaged proteins from irreversible aggregation. Plays an important role in the bacterial defense system toward oxidative stress. This is 33 kDa chaperonin from Prochlorococcus marinus (strain MIT 9301).